Here is a 276-residue protein sequence, read N- to C-terminus: Undecaprenyl-diphosphatase 1 (276 aa).

The next 8 helical transmembrane spans lie at 1–21, 44–64, 87–107, 114–134, 150–170, 190–210, 222–242, and 251–271; these read MSLWFLVFLSVLQGVTELFPV, QLLPFLVALHLGTALALLWYF, GHLMWALIIGTIPTGLVGLLL, VFHDLRIVAAALIINGVLLWL, LTFKQAFFVGLAQVGALIPGF, AAEFSFLLGTPIIFAAGLLEL, DALLGGVLTAIAAYLSVRFLM, and LASFGLYCVLAGLFCLGWFMF.

Belongs to the UppP family.

It localises to the cell inner membrane. It carries out the reaction di-trans,octa-cis-undecaprenyl diphosphate + H2O = di-trans,octa-cis-undecaprenyl phosphate + phosphate + H(+). Its function is as follows. Catalyzes the dephosphorylation of undecaprenyl diphosphate (UPP). Confers resistance to bacitracin. The protein is Undecaprenyl-diphosphatase 1 of Burkholderia pseudomallei (strain 1106a).